The primary structure comprises 251 residues: Chloride intracellular channel protein 5 (251 aa).

Positions 1 to 98 (MTDSATANGD…EEFLEETLTP (98 aa)) are required for insertion into the membrane. Positions 32–35 (CPFS) match the G-site motif. A helical transmembrane segment spans residues 34 to 54 (FSQRLFMILWLKGVVFNVTTV). Residues 101-241 (YPKLAARHRE…AADSEIELAY (141 aa)) enclose the GST C-terminal domain.

Belongs to the chloride channel CLIC family. In terms of assembly, component of a multimeric complex consisting of several cytoskeletal proteins, including actin, ezrin, alpha-actinin, gelsolin, and IQGAP1. Interacts with AKAP9. Interacts with TPRN. TPRN, CLIC5 and PTPQR form concentric rings at the base of stereocilia and may form a complex. Interacts with EZR, MYO6 and RDX; the proteins may work together as a complex to stabilize linkages between the plasma membrane and subjacent actin cytoskeleton at the stereocilium base. As to expression, detected in cochlea, in cochlear and vestibular hair cell bundles in the organ of Corti (at protein level). Expressed neonatal and adult cardiomyocytes (at protein level).

Its subcellular location is the golgi apparatus. The protein resides in the cytoplasm. It is found in the cytoskeleton. The protein localises to the microtubule organizing center. It localises to the centrosome. Its subcellular location is the cell cortex. The protein resides in the membrane. It is found in the apical cell membrane. The protein localises to the mitochondrion. It localises to the cell projection. Its subcellular location is the stereocilium. It carries out the reaction Na(+)(in) = Na(+)(out). It catalyses the reaction K(+)(in) = K(+)(out). The catalysed reaction is chloride(in) = chloride(out). Inhibited by F-actin. In terms of biological role, in the soluble state, catalyzes glutaredoxin-like thiol disulfide exchange reactions with reduced glutathione as electron donor. Can insert into membranes and form non-selective ion channels almost equally permeable to Na(+), K(+) and Cl(-). Required for normal hearing. It is necessary for the formation of stereocilia in the inner ear and normal development of the organ of Corti. May play a role in the regulation of transepithelial ion absorption and secretion. Is required for the development and/or maintenance of the proper glomerular endothelial cell and podocyte architecture. Plays a role in formation of the lens suture in the eye, which is important for normal optical properties of the lens. This Rattus norvegicus (Rat) protein is Chloride intracellular channel protein 5 (Clic5).